The sequence spans 427 residues: C4-dicarboxylate TRAP transporter large permease protein DctM (427 aa).

A run of 13 helical transmembrane segments spans residues 2–22, 55–75, 91–111, 115–135, 138–158, 171–191, 216–236, 237–257, 274–294, 310–330, 335–355, 359–379, and 396–416; these read TILF…PIAV, TLLA…GGVA, GGLA…SGSS, VAAV…PQAF, GIVC…VMVV, FIAG…VIYI, ALWG…GAFT, PTEA…FVYR, LTIM…VLTT, LSPW…GNFM, IILI…IDPI, IIMV…LNLF, and ALPW…IPAV.

The protein belongs to the TRAP transporter large permease family. The complex comprises the extracytoplasmic solute receptor protein DctP, and the two transmembrane proteins DctQ and DctM.

The protein resides in the cell inner membrane. Part of the tripartite ATP-independent periplasmic (TRAP) transport system DctPQM involved in C4-dicarboxylates uptake. In Pseudomonas aeruginosa (strain ATCC 15692 / DSM 22644 / CIP 104116 / JCM 14847 / LMG 12228 / 1C / PRS 101 / PAO1), this protein is C4-dicarboxylate TRAP transporter large permease protein DctM.